We begin with the raw amino-acid sequence, 344 residues long: N-acetyl-gamma-glutamyl-phosphate reductase (344 aa).

Cys150 is a catalytic residue.

Belongs to the NAGSA dehydrogenase family. Type 1 subfamily.

It localises to the cytoplasm. The enzyme catalyses N-acetyl-L-glutamate 5-semialdehyde + phosphate + NADP(+) = N-acetyl-L-glutamyl 5-phosphate + NADPH + H(+). It functions in the pathway amino-acid biosynthesis; L-arginine biosynthesis; N(2)-acetyl-L-ornithine from L-glutamate: step 3/4. Functionally, catalyzes the NADPH-dependent reduction of N-acetyl-5-glutamyl phosphate to yield N-acetyl-L-glutamate 5-semialdehyde. The chain is N-acetyl-gamma-glutamyl-phosphate reductase from Pseudomonas savastanoi pv. phaseolicola (strain 1448A / Race 6) (Pseudomonas syringae pv. phaseolicola (strain 1448A / Race 6)).